Here is a 187-residue protein sequence, read N- to C-terminus: Putative carbonic anhydrase YtiB (187 aa).

Residues Cys38, Asp40, His96, and Cys99 each coordinate Zn(2+).

It belongs to the beta-class carbonic anhydrase family. Zn(2+) serves as cofactor.

It catalyses the reaction hydrogencarbonate + H(+) = CO2 + H2O. Functionally, reversible hydration of carbon dioxide. This is Putative carbonic anhydrase YtiB (ytiB) from Bacillus subtilis (strain 168).